The chain runs to 96 residues: Basic blue protein (96 aa).

Residues 1 to 96 (AVYVVGGSGG…SGMKIAVNAL (96 aa)) form the Phytocyanin domain. Cu cation-binding residues include His39, Cys79, His84, and Met89. A disulfide bridge links Cys52 with Cys85.

The chain is Basic blue protein from Cucumis sativus (Cucumber).